The chain runs to 449 residues: GTPase Der (449 aa).

EngA-type G domains lie at 4–169 and 177–353; these read PIVA…PAGE and IQVA…EQHR. Residues 10–17, 57–61, 120–123, 183–190, 230–234, and 295–298 each bind GTP; these read GRPNVGKS, DTGGL, NKCE, DTAGI, and NKWD. The 86-residue stretch at 354–439 folds into the KH-like domain; it reads RRVTTAVVND…PIRLLWRSKK (86 aa).

This sequence belongs to the TRAFAC class TrmE-Era-EngA-EngB-Septin-like GTPase superfamily. EngA (Der) GTPase family. In terms of assembly, associates with the 50S ribosomal subunit.

In terms of biological role, GTPase that plays an essential role in the late steps of ribosome biogenesis. This chain is GTPase Der, found in Thermosynechococcus vestitus (strain NIES-2133 / IAM M-273 / BP-1).